The sequence spans 428 residues: 3-phosphoshikimate 1-carboxyvinyltransferase (428 aa).

3-phosphoshikimate contacts are provided by Lys-22, Ser-23, and Arg-27. Lys-22 provides a ligand contact to phosphoenolpyruvate. Residues Gly-96 and Arg-124 each contribute to the phosphoenolpyruvate site. Residues Ser-170, Ser-171, Gln-172, Ser-198, Asp-314, Asn-337, and Lys-341 each contribute to the 3-phosphoshikimate site. Gln-172 provides a ligand contact to phosphoenolpyruvate. Catalysis depends on Asp-314, which acts as the Proton acceptor. Positions 345, 387, and 412 each coordinate phosphoenolpyruvate.

Belongs to the EPSP synthase family. In terms of assembly, monomer.

The protein localises to the cytoplasm. It catalyses the reaction 3-phosphoshikimate + phosphoenolpyruvate = 5-O-(1-carboxyvinyl)-3-phosphoshikimate + phosphate. It functions in the pathway metabolic intermediate biosynthesis; chorismate biosynthesis; chorismate from D-erythrose 4-phosphate and phosphoenolpyruvate: step 6/7. Catalyzes the transfer of the enolpyruvyl moiety of phosphoenolpyruvate (PEP) to the 5-hydroxyl of shikimate-3-phosphate (S3P) to produce enolpyruvyl shikimate-3-phosphate and inorganic phosphate. The protein is 3-phosphoshikimate 1-carboxyvinyltransferase of Shewanella amazonensis (strain ATCC BAA-1098 / SB2B).